Here is an 896-residue protein sequence, read N- to C-terminus: Translation initiation factor IF-2 (896 aa).

The span at 93 to 219 (VKRDPQEAER…RMAEENEKNW (127 aa)) shows a compositional bias: basic and acidic residues. Positions 93-307 (VKRDPQEAER…GSALQQGFQK (215 aa)) are disordered. Residues 256-271 (GRSRSSKAARPAKKGN) are compositionally biased toward basic residues. Over residues 272–285 (KHAESKADREEARA) the composition is skewed to basic and acidic residues. Residues 395–564 (PRAPVVTIMG…LLQAEVLELK (170 aa)) form the tr-type G domain. The interval 404–411 (GHVDHGKT) is G1. 404-411 (GHVDHGKT) contributes to the GTP binding site. A G2 region spans residues 429 to 433 (GITQH). The G3 stretch occupies residues 450–453 (DTPG). GTP is bound by residues 450-454 (DTPGH) and 504-507 (NKID). The segment at 504–507 (NKID) is G4. A G5 region spans residues 540 to 542 (SAK).

Belongs to the TRAFAC class translation factor GTPase superfamily. Classic translation factor GTPase family. IF-2 subfamily.

Its subcellular location is the cytoplasm. Its function is as follows. One of the essential components for the initiation of protein synthesis. Protects formylmethionyl-tRNA from spontaneous hydrolysis and promotes its binding to the 30S ribosomal subunits. Also involved in the hydrolysis of GTP during the formation of the 70S ribosomal complex. This Klebsiella pneumoniae (strain 342) protein is Translation initiation factor IF-2.